The following is a 264-amino-acid chain: Thiazole synthase (264 aa).

Lys98 (schiff-base intermediate with DXP) is an active-site residue. 1-deoxy-D-xylulose 5-phosphate-binding positions include Gly159, 185 to 186, and 207 to 208; these read AG and AS.

It belongs to the ThiG family. In terms of assembly, homotetramer. Forms heterodimers with either ThiH or ThiS.

Its subcellular location is the cytoplasm. It catalyses the reaction [ThiS sulfur-carrier protein]-C-terminal-Gly-aminoethanethioate + 2-iminoacetate + 1-deoxy-D-xylulose 5-phosphate = [ThiS sulfur-carrier protein]-C-terminal Gly-Gly + 2-[(2R,5Z)-2-carboxy-4-methylthiazol-5(2H)-ylidene]ethyl phosphate + 2 H2O + H(+). Its pathway is cofactor biosynthesis; thiamine diphosphate biosynthesis. Catalyzes the rearrangement of 1-deoxy-D-xylulose 5-phosphate (DXP) to produce the thiazole phosphate moiety of thiamine. Sulfur is provided by the thiocarboxylate moiety of the carrier protein ThiS. In vitro, sulfur can be provided by H(2)S. The protein is Thiazole synthase of Streptomyces griseus subsp. griseus (strain JCM 4626 / CBS 651.72 / NBRC 13350 / KCC S-0626 / ISP 5235).